The chain runs to 357 residues: Glucose-6-phosphatase catalytic subunit 1 (357 aa).

Over 1–28 (MEKGMDVLHDFGIQSTHYLQVNYQDSQD) the chain is Lumenal. The helical transmembrane segment at 29–49 (WFILVSVIADLRNAFYVLFPI) threads the bilayer. Residues 50–60 (WFHLREAVGIK) are Cytoplasmic-facing. Residues 61–81 (LLWVAVIGDWLNLVFKWILFG) traverse the membrane as a helical segment. At 82 to 117 (QRPYWWVMDTDYYSNTSVPLIKQFPVTCETGPGSPS) the chain is on the lumenal side. Arg-83 lines the substrate pocket. An N-linked (GlcNAc...) asparagine glycan is attached at Asn-96. The helical transmembrane segment at 118–138 (GHAMGTAGVYYVMVTSTLSIF) threads the bilayer. The active-site Proton donor is His-119. Residues 139 to 147 (RGRKRPTYR) lie on the Cytoplasmic side of the membrane. Residues 148 to 168 (FRCLNILLWLGFWAVQLNVCL) form a helical membrane-spanning segment. Residues 169-170 (SR) lie on the Lumenal side of the membrane. Arg-170 contacts substrate. The chain crosses the membrane as a helical span at residues 171 to 191 (IYLAAHFPHQVVAGVLSGIAV). Residue His-176 is the Nucleophile of the active site. At 192–209 (AETFRHIQSIYNASLKKY) the chain is on the cytoplasmic side. Residues 210-230 (FLITFFLFSFAIGFYLLLKGL) form a helical membrane-spanning segment. Topologically, residues 231–254 (GVDLLWTLEKARRWCERPEWVHID) are lumenal. The chain crosses the membrane as a helical span at residues 255-275 (TTPFASLLKNVGTLFGLGVTL). Over 276 to 291 (NSSMYRESCKGKLSKW) the chain is Cytoplasmic. Residues 292-312 (FPFRLSCIVVSLILLHLFDSL) form a helical membrane-spanning segment. Residues 313 to 320 (KPPSQTEL) lie on the Lumenal side of the membrane. The chain crosses the membrane as a helical span at residues 321–341 (IFYTLSFCKSAAVPLASVSLI). Topologically, residues 342–357 (PYCLARVFDQPDKKSL) are cytoplasmic. Residues 354–357 (KKSL) carry the Prevents secretion from ER motif.

The protein belongs to the glucose-6-phosphatase family.

The protein resides in the endoplasmic reticulum membrane. The catalysed reaction is D-glucose 6-phosphate + H2O = D-glucose + phosphate. It functions in the pathway carbohydrate biosynthesis; gluconeogenesis. In terms of biological role, hydrolyzes glucose-6-phosphate to glucose in the endoplasmic reticulum. Forms with the glucose-6-phosphate transporter (SLC37A4/G6PT) the complex responsible for glucose production in the terminal step of glycogenolysis and gluconeogenesis. Hence, it is the key enzyme in homeostatic regulation of blood glucose levels. The sequence is that of Glucose-6-phosphatase catalytic subunit 1 (G6PC1) from Canis lupus familiaris (Dog).